The sequence spans 151 residues: UPF0208 membrane protein YE1335 (151 aa).

The next 2 membrane-spanning stretches (helical) occupy residues 46–66 (FGIR…IALG) and 69–89 (LGPA…GLWW).

It belongs to the UPF0208 family.

It localises to the cell inner membrane. This chain is UPF0208 membrane protein YE1335, found in Yersinia enterocolitica serotype O:8 / biotype 1B (strain NCTC 13174 / 8081).